The primary structure comprises 136 residues: Large ribosomal subunit protein uL16 (136 aa).

This sequence belongs to the universal ribosomal protein uL16 family. Part of the 50S ribosomal subunit.

In terms of biological role, binds 23S rRNA and is also seen to make contacts with the A and possibly P site tRNAs. This is Large ribosomal subunit protein uL16 from Vibrio atlanticus (strain LGP32) (Vibrio splendidus (strain Mel32)).